Reading from the N-terminus, the 473-residue chain is Phosphatidylserine synthase 1 (473 aa).

Residue Ala2 is modified to N-acetylalanine. Residues 2–35 (ASCVGSRTLSKDDVNYKMHFRMINEQQVEDITID) lie on the Cytoplasmic side of the membrane. A helical membrane pass occupies residues 36–56 (FFYRPHTITLLSFTIVSLMYF). The Lumenal segment spans residues 57–72 (AFTRDDSVPEDNIWRG). A helical transmembrane segment spans residues 73–93 (ILSVIFFFLIISVLAFPNGPF). The Cytoplasmic segment spans residues 94-102 (TRPHPALWR). A helical transmembrane segment spans residues 103 to 123 (MVFGLSVLYFLFLVFLLFLNF). Over 124–186 (EQVKSLMYWL…AMKALLIRSY (63 aa)) the chain is Lumenal. The chain crosses the membrane as a helical span at residues 187-207 (GLCWTISITWELTELFFMHLL). Over 208–216 (PNFAECWWD) the chain is Cytoplasmic. A helical membrane pass occupies residues 217–237 (QVILDILLCNGGGIWLGMVVC). At 238–286 (RFLEMRTYHWASFKDIHTTTGKIKRAVLQFTPASWTYVRWFDPKSSFQR) the chain is on the lumenal side. Residues 287 to 307 (VAGVYLFMIIWQLTELNTFFL) traverse the membrane as a helical segment. Over 308 to 319 (KHIFVFQASHPL) the chain is Cytoplasmic. The chain crosses the membrane as a helical span at residues 320–342 (SWGRILFIGGITAPTVRQYYAYL). Over 343–355 (TDTQCKRVGTQCW) the chain is Lumenal. The chain crosses the membrane as a helical span at residues 356–376 (VFGVIGFLEAIVCIKFGQDLF). At 377–383 (SKTQILY) the chain is on the cytoplasmic side. The helical transmembrane segment at 384 to 404 (VVLWLLCVAFTTFLCLYGMIW) threads the bilayer. Residues 405–473 (YAEHYGHREK…SKVTNGVGKK (69 aa)) lie on the Lumenal side of the membrane. Phosphoserine occurs at positions 417, 425, 442, and 454. The disordered stretch occupies residues 430–473 (WHHRKGTKGSEDSPPKHAGNNESHSSRRRNRHSKSKVTNGVGKK). Over residues 455–464 (SRRRNRHSKS) the composition is skewed to basic residues.

Belongs to the phosphatidyl serine synthase family.

It localises to the endoplasmic reticulum membrane. It carries out the reaction a 1,2-diacyl-sn-glycero-3-phosphoethanolamine + L-serine = a 1,2-diacyl-sn-glycero-3-phospho-L-serine + ethanolamine. The catalysed reaction is a 1,2-diacyl-sn-glycero-3-phosphocholine + L-serine = a 1,2-diacyl-sn-glycero-3-phospho-L-serine + choline. It functions in the pathway phospholipid metabolism; phosphatidylserine biosynthesis. Its activity is regulated as follows. Requires calcium ions. Inhibited by exogenous phosphatidylserine. Its function is as follows. Catalyzes a base-exchange reaction in which the polar head group of phosphatidylethanolamine (PE) or phosphatidylcholine (PC) is replaced by L-serine. Catalyzes mainly the conversion of phosphatidylcholine. Also converts, in vitro and to a lesser extent, phosphatidylethanolamine. The sequence is that of Phosphatidylserine synthase 1 (PTDSS1) from Homo sapiens (Human).